We begin with the raw amino-acid sequence, 71 residues long: AKMNLSSYILILTFSLFSQGILLSASKSIRNSDDDMVFNTFRLGKAFQKEDTAEKSVIAPSLEEYKNDESS.

A signal peptide spans 1 to 20; the sequence is AKMNLSSYILILTFSLFSQG.

The protein belongs to the melanin-concentrating hormone family.

The protein resides in the secreted. The protein is Pro-MCH (PMCH) of Pan paniscus (Pygmy chimpanzee).